The primary structure comprises 485 residues: Apolipoprotein N-acyltransferase (485 aa).

6 consecutive transmembrane segments (helical) span residues 8–28 (IAGA…IAFV), 49–69 (GWLF…VSIH), 76–96 (VPLA…FIAF), 121–141 (WWVV…WLFL), 157–177 (FGIY…YLLV), and 186–206 (IMCL…TFIP). Residues 220–457 (VQGNIGQRLK…RLLLTGQIKP (238 aa)) form the CN hydrolase domain. Glu-259 (proton acceptor) is an active-site residue. The active site involves Lys-317. Cys-369 (nucleophile) is an active-site residue. The helical transmembrane segment at 464-484 (LMRWNYYPVVGIIIIFLLLTF) threads the bilayer.

Belongs to the CN hydrolase family. Apolipoprotein N-acyltransferase subfamily.

The protein localises to the cell inner membrane. The enzyme catalyses N-terminal S-1,2-diacyl-sn-glyceryl-L-cysteinyl-[lipoprotein] + a glycerophospholipid = N-acyl-S-1,2-diacyl-sn-glyceryl-L-cysteinyl-[lipoprotein] + a 2-acyl-sn-glycero-3-phospholipid + H(+). Its pathway is protein modification; lipoprotein biosynthesis (N-acyl transfer). In terms of biological role, catalyzes the phospholipid dependent N-acylation of the N-terminal cysteine of apolipoprotein, the last step in lipoprotein maturation. The sequence is that of Apolipoprotein N-acyltransferase from Coxiella burnetii (strain RSA 493 / Nine Mile phase I).